Consider the following 942-residue polypeptide: Netrin receptor UNC5B-b (942 aa).

The signal sequence occupies residues 1–30 (MYLSRIPGGAALAALLVALLLCCNFPPSIA). Over 31–380 (GIEYSDVLPD…LESTGDVALY (350 aa)) the chain is Extracellular. The region spanning 51–148 (PHFLLEPEDA…AGTTKSKRSY (98 aa)) is the Ig-like domain. 9 disulfide bridges follow: cysteine 72/cysteine 133, cysteine 84/cysteine 131, cysteine 177/cysteine 228, cysteine 261/cysteine 298, cysteine 265/cysteine 302, cysteine 276/cysteine 288, cysteine 317/cysteine 351, cysteine 321/cysteine 356, and cysteine 329/cysteine 341. In terms of domain architecture, Ig-like C2-type spans 150 to 245 (RIAYLRKNFD…KRRSTTATVI (96 aa)). N-linked (GlcNAc...) asparagine glycosylation occurs at asparagine 225. TSP type-1 domains follow at residues 249 to 303 (NGGW…TMCP) and 305 to 357 (DGGW…GLCM). N-linked (GlcNAc...) asparagine glycosylation is present at asparagine 350. Residues 381–401 (AGLVVAIFIIIILLMAVGIVV) form a helical membrane-spanning segment. The Cytoplasmic portion of the chain corresponds to 402 to 942 (YRRNCREFDT…MLVMATDGDC (541 aa)). In terms of domain architecture, ZU5 spans 541–684 (NSVTGTFGSL…LGTYAFVGES (144 aa)). The UPA domain stretch occupies residues 687–835 (RSAIKRLQLA…LEENVKSFDP (149 aa)). The Death domain occupies 863-940 (ICNSLDAPNS…EMMLVMATDG (78 aa)).

The protein belongs to the unc-5 family. As to quaternary structure, interacts (via extracellular domain) with flrt3 (via extracellular domain). Interacts with rnd1.

It localises to the cell membrane. Its function is as follows. Plays a role in cell-cell adhesion during embryonic development. Receptor for netrin required for axon guidance. Mediates axon repulsion of neuronal growth cones in the developing nervous system upon ligand binding. The polypeptide is Netrin receptor UNC5B-b (Xenopus laevis (African clawed frog)).